Reading from the N-terminus, the 495-residue chain is Tubulin epsilon and delta complex protein 1 (495 aa).

A coiled-coil region spans residues 355 to 387 (GGELDLVVRELQALEEELREAAERRRAAWEAKA). The disordered stretch occupies residues 417-440 (CWERDGGPAQPHGPHRLVRREDGA). A coiled-coil region spans residues 452 to 480 (IRTLRSQEACLEAVLRRLQGQCRQELARL).

Interacts with TEDC2. Found in a complex with TEDC1, TEDC2, TUBE1 and TUBD1.

The protein resides in the cell projection. It localises to the cilium. The protein localises to the cytoplasm. It is found in the cytoskeleton. Its subcellular location is the microtubule organizing center. The protein resides in the centrosome. It localises to the centriole. In terms of biological role, acts as a positive regulator of ciliary hedgehog signaling. Required for centriole stability. May play a role in counteracting perturbation of actin filaments, such as after treatment with the actin depolymerizing microbial metabolite Chivosazole F. The chain is Tubulin epsilon and delta complex protein 1 from Homo sapiens (Human).